A 418-amino-acid polypeptide reads, in one-letter code: D-amino acid dehydrogenase (418 aa).

Valine 3–tyrosine 17 is a binding site for FAD.

It belongs to the DadA oxidoreductase family. The cofactor is FAD.

The catalysed reaction is a D-alpha-amino acid + A + H2O = a 2-oxocarboxylate + AH2 + NH4(+). Its pathway is amino-acid degradation; D-alanine degradation; NH(3) and pyruvate from D-alanine: step 1/1. Oxidative deamination of D-amino acids. This Granulibacter bethesdensis (strain ATCC BAA-1260 / CGDNIH1) protein is D-amino acid dehydrogenase.